We begin with the raw amino-acid sequence, 156 residues long: WASQVSENRPVCKAIIQGKQFEGLVDTGADVSIIALNQWPKNWPKQKAVTGLVGIGTASEVYQSTEILHCLGPDNQESTVQPMITSIPLNLWGRDLLQQWGAEITMPAPLYSPTSQKIMTKMGYILGKGLGKNEDGIKIPVEAKINQKREGIGYPF.

The 76-residue stretch at F21–L96 folds into the Peptidase A2 domain. The active site involves D26. Positions Y111–F156 constitute a G-patch domain.

The protein belongs to the peptidase A2 family. HERV class-II K(HML-2) subfamily. Active as a homodimer. Post-translationally, autoproteolytically processed at the N-terminus. Expected C-terminal autoprocessing not detected. The sequence shown is that of the processed Pro protein.

The enzyme catalyses Processing at the authentic HIV-1 PR recognition site and release of the mature p17 matrix and the p24 capsid protein, as a result of the cleavage of the -SQNY-|-PIVQ- cleavage site.. Retroviral proteases have roles in the processing of the primary translation products and the maturation of the viral particle. Endogenous Pro proteins may have kept, lost or modified their original function during evolution. The polypeptide is Endogenous retrovirus group K member 19 Pro protein (ERVK-19) (Homo sapiens (Human)).